The chain runs to 490 residues: Serine/threonine-protein kinase BSK6 (490 aa).

The N-myristoyl glycine moiety is linked to residue Gly2. Ser25 bears the Phosphoserine mark. Residues 56–310 (DNIVSEHGEK…KSLVTSLVTL (255 aa)) form the Protein kinase domain. Residues 62–70 (HGEKAPNVV) and Lys84 contribute to the ATP site. The Proton acceptor role is filled by Asp178. Ser373 is modified (phosphoserine).

It belongs to the protein kinase superfamily. Ser/Thr protein kinase family. In terms of assembly, interacts with BRI1, ASK7/BIN2, ASK9/BIL2, BSK1, BSK5, BSK8 and BSK11. Phosphorylated by BRI1, ASK7/BIN2 and ASK9/BIL2.

The protein localises to the cell membrane. It carries out the reaction L-seryl-[protein] + ATP = O-phospho-L-seryl-[protein] + ADP + H(+). The enzyme catalyses L-threonyl-[protein] + ATP = O-phospho-L-threonyl-[protein] + ADP + H(+). Probable serine/threonine kinase that acts as a positive regulator of brassinosteroid (BR) signaling downstream of the receptor kinase BRI1. Functions redundantly with BSK3, BSK4, BSK7 and BSK8. This chain is Serine/threonine-protein kinase BSK6, found in Arabidopsis thaliana (Mouse-ear cress).